A 155-amino-acid polypeptide reads, in one-letter code: Small ribosomal subunit protein uS7cz/uS7cy (155 aa).

The protein belongs to the universal ribosomal protein uS7 family. In terms of assembly, part of the 30S ribosomal subunit.

It localises to the plastid. Its subcellular location is the chloroplast. In terms of biological role, one of the primary rRNA binding proteins, it binds directly to 16S rRNA where it nucleates assembly of the head domain of the 30S subunit. The protein is Small ribosomal subunit protein uS7cz/uS7cy (rps7-A) of Chloranthus spicatus (Chulantree).